A 373-amino-acid chain; its full sequence is Dual-specificity RNA methyltransferase RlmN (373 aa).

Glutamate 94 (proton acceptor) is an active-site residue. Positions 100 to 339 (EDDRATLCVS…VIVRKTRGDD (240 aa)) constitute a Radical SAM core domain. Cysteine 107 and cysteine 344 are disulfide-bonded. The [4Fe-4S] cluster site is built by cysteine 114, cysteine 118, and cysteine 121. S-adenosyl-L-methionine contacts are provided by residues 168 to 169 (GE), serine 200, 222 to 224 (SIH), and asparagine 301. Cysteine 344 acts as the S-methylcysteine intermediate in catalysis.

This sequence belongs to the radical SAM superfamily. RlmN family. [4Fe-4S] cluster is required as a cofactor.

Its subcellular location is the cytoplasm. It catalyses the reaction adenosine(2503) in 23S rRNA + 2 reduced [2Fe-2S]-[ferredoxin] + 2 S-adenosyl-L-methionine = 2-methyladenosine(2503) in 23S rRNA + 5'-deoxyadenosine + L-methionine + 2 oxidized [2Fe-2S]-[ferredoxin] + S-adenosyl-L-homocysteine. It carries out the reaction adenosine(37) in tRNA + 2 reduced [2Fe-2S]-[ferredoxin] + 2 S-adenosyl-L-methionine = 2-methyladenosine(37) in tRNA + 5'-deoxyadenosine + L-methionine + 2 oxidized [2Fe-2S]-[ferredoxin] + S-adenosyl-L-homocysteine. In terms of biological role, specifically methylates position 2 of adenine 2503 in 23S rRNA and position 2 of adenine 37 in tRNAs. m2A2503 modification seems to play a crucial role in the proofreading step occurring at the peptidyl transferase center and thus would serve to optimize ribosomal fidelity. This chain is Dual-specificity RNA methyltransferase RlmN, found in Shewanella sp. (strain ANA-3).